A 116-amino-acid polypeptide reads, in one-letter code: Large ribosomal subunit protein bL17 (116 aa).

This sequence belongs to the bacterial ribosomal protein bL17 family. As to quaternary structure, part of the 50S ribosomal subunit. Contacts protein L32.

The sequence is that of Large ribosomal subunit protein bL17 from Aliarcobacter butzleri (strain RM4018) (Arcobacter butzleri).